A 198-amino-acid polypeptide reads, in one-letter code: MKQFIDFIPLLLFFIVYKLDPRVIDLAGHELTFGGIYSATAVLIISSVVVYGAIFISQRKLEKSQWLTLVACLVFGSLTLAFHSETFLKWKAPVVNWLFALAFIGSHFIGDRLLIKRIMGHALTLPEPVWTRLNVAWIVFFLFCGAANLFVAFTFQDYWVDFKVFGSLGMTVLFLVAQGIYLSRHLHDADPTTPKTED.

5 consecutive transmembrane segments (helical) span residues isoleucine 36 to isoleucine 56, leucine 67 to phenylalanine 87, tryptophan 90 to glycine 110, valine 135 to phenylalanine 155, and phenylalanine 162 to leucine 182.

Belongs to the YciB family.

It is found in the cell inner membrane. In terms of biological role, plays a role in cell envelope biogenesis, maintenance of cell envelope integrity and membrane homeostasis. The polypeptide is Inner membrane-spanning protein YciB (Pseudomonas fluorescens (strain SBW25)).